A 358-amino-acid polypeptide reads, in one-letter code: Phosphoserine aminotransferase (358 aa).

Arginine 41 contacts L-glutamate. Pyridoxal 5'-phosphate is bound by residues 75-76 (AS), tryptophan 100, threonine 148, aspartate 167, and glutamine 190. Lysine 191 is subject to N6-(pyridoxal phosphate)lysine. 233–234 (NT) is a pyridoxal 5'-phosphate binding site.

This sequence belongs to the class-V pyridoxal-phosphate-dependent aminotransferase family. SerC subfamily. As to quaternary structure, homodimer. The cofactor is pyridoxal 5'-phosphate.

It is found in the cytoplasm. The enzyme catalyses O-phospho-L-serine + 2-oxoglutarate = 3-phosphooxypyruvate + L-glutamate. It catalyses the reaction 4-(phosphooxy)-L-threonine + 2-oxoglutarate = (R)-3-hydroxy-2-oxo-4-phosphooxybutanoate + L-glutamate. Its pathway is amino-acid biosynthesis; L-serine biosynthesis; L-serine from 3-phospho-D-glycerate: step 2/3. It participates in cofactor biosynthesis; pyridoxine 5'-phosphate biosynthesis; pyridoxine 5'-phosphate from D-erythrose 4-phosphate: step 3/5. Functionally, catalyzes the reversible conversion of 3-phosphohydroxypyruvate to phosphoserine and of 3-hydroxy-2-oxo-4-phosphonooxybutanoate to phosphohydroxythreonine. This Campylobacter jejuni (strain RM1221) protein is Phosphoserine aminotransferase.